The chain runs to 160 residues: 3-hydroxyacyl-[acyl-carrier-protein] dehydratase FabZ (160 aa).

Residue H60 is part of the active site.

Belongs to the thioester dehydratase family. FabZ subfamily.

Its subcellular location is the cytoplasm. It catalyses the reaction a (3R)-hydroxyacyl-[ACP] = a (2E)-enoyl-[ACP] + H2O. Functionally, involved in unsaturated fatty acids biosynthesis. Catalyzes the dehydration of short chain beta-hydroxyacyl-ACPs and long chain saturated and unsaturated beta-hydroxyacyl-ACPs. The polypeptide is 3-hydroxyacyl-[acyl-carrier-protein] dehydratase FabZ (Rhodospirillum rubrum (strain ATCC 11170 / ATH 1.1.1 / DSM 467 / LMG 4362 / NCIMB 8255 / S1)).